A 103-amino-acid polypeptide reads, in one-letter code: Large ribosomal subunit protein bL21 (103 aa).

It belongs to the bacterial ribosomal protein bL21 family. Part of the 50S ribosomal subunit. Contacts protein L20.

This protein binds to 23S rRNA in the presence of protein L20. The protein is Large ribosomal subunit protein bL21 of Saccharophagus degradans (strain 2-40 / ATCC 43961 / DSM 17024).